Here is a 514-residue protein sequence, read N- to C-terminus: Cytochrome P450 94A1 (514 aa).

The chain crosses the membrane as a helical span at residues 7-29; sequence EVLLPYLLPLLLLILPTTIFFLT. Cysteine 458 contacts heme.

This sequence belongs to the cytochrome P450 family. Heme is required as a cofactor.

The protein localises to the endoplasmic reticulum membrane. Its function is as follows. Catalyzes the omega-hydroxylation of various fatty acids (FA) from 10 to 18 carbon atoms. The substrate specificity is higher for laurate &gt; palmitate &gt; myristate &gt; linolenate &gt; linoleate &gt; oleate &gt; caprate. May play a minor role in cutin synthesis and could be involved in plant defense. In Vicia sativa (Spring vetch), this protein is Cytochrome P450 94A1 (CYP94A1).